A 485-amino-acid chain; its full sequence is Adenosylhomocysteinase 2 (485 aa).

Substrate is bound by residues T64, D139, and E205. NAD(+) is bound at residue 206 to 208; the sequence is TTT. Residues K235 and D239 each contribute to the substrate site. NAD(+) is bound by residues N240, 269-274, E292, N327, 348-350, and N397; these read GYGDVG and IGH.

The protein belongs to the adenosylhomocysteinase family. It depends on NAD(+) as a cofactor.

It carries out the reaction S-adenosyl-L-homocysteine + H2O = L-homocysteine + adenosine. It participates in amino-acid biosynthesis; L-homocysteine biosynthesis; L-homocysteine from S-adenosyl-L-homocysteine: step 1/1. In terms of biological role, adenosylhomocysteine is a competitive inhibitor of S-adenosyl-L-methionine-dependent methyl transferase reactions; therefore adenosylhomocysteinase may play a key role in the control of methylations via regulation of the intracellular concentration of adenosylhomocysteine. This Arabidopsis thaliana (Mouse-ear cress) protein is Adenosylhomocysteinase 2 (SAHH2).